Here is a 749-residue protein sequence, read N- to C-terminus: Transcription factor RFX3 (749 aa).

Residues 183–258 constitute a DNA-binding region (RFX-type winged-helix); it reads HLQWLLDNYE…YHYYGIRVKP (76 aa). Residues 663–699 form a disordered region; that stretch reads VSPGNLDKDEGSEVESETDEDLDDSSEPRAKREKTEL. Residues 674 to 687 show a composition bias toward acidic residues; it reads SEVESETDEDLDDS. Positions 688-698 are enriched in basic and acidic residues; it reads SEPRAKREKTE.

Belongs to the RFX family. Heterodimer; heterodimerizes with RFX1 and RFX2, and RFX6. Expressed in ciliated cells of the node and in the ciliated ependymal cells of the subcommissural organ (SCO), choroid plexuses (CP) and ventricular walls during embryonic and postnatal development. Expressed in developing and mature pancreatic endocrine cells during embryogenesis and in adults (at protein level).

The protein resides in the nucleus. Its function is as follows. Transcription factor required for ciliogenesis and islet cell differentiation during endocrine pancreas development. Essential for the differentiation of nodal monocilia and left-right asymmetry specification during embryogenesis. Required for the biogenesis of motile cilia by governing growth and beating efficiency of motile cells. Also required for ciliated ependymal cell differentiation. Together with RFX6, participates in the differentiation of 4 of the 5 islet cell types during endocrine pancreas development, with the exception of pancreatic PP (polypeptide-producing) cells. Regulates transcription by forming a heterodimer with another RFX protein and binding to the X-box in the promoter of target genes. Regulates the expression of genes involved in ciliary assembly (DYNC2LI1, FOXJ1 and BBS4) and genes involved in ciliary motility (DNAH11, DNAH9 and DNAH5). Represses transcription of MAP1A in non-neuronal cells but not in neuronal cells. The protein is Transcription factor RFX3 (Rfx3) of Mus musculus (Mouse).